Consider the following 176-residue polypeptide: Large ribosomal subunit protein uL15 (176 aa).

Over residues 1–13 (MKLNDLRDNEGAR) the composition is skewed to basic and acidic residues. 2 disordered regions span residues 1–48 (MKLN…AIKG) and 151–176 (IPAA…AKAE). The span at 21 to 35 (RGIGSGKGKTGGRGQ) shows a compositional bias: gly residues. Positions 156 to 176 (PEHEKKAARSEANKKAKAKAE) are enriched in basic and acidic residues.

Belongs to the universal ribosomal protein uL15 family. Part of the 50S ribosomal subunit.

Binds to the 23S rRNA. The polypeptide is Large ribosomal subunit protein uL15 (Erythrobacter litoralis (strain HTCC2594)).